Consider the following 219-residue polypeptide: Flagellar transcriptional regulator FlhC (219 aa).

Cys137, Cys140, Cys157, and Cys160 together coordinate Zn(2+).

This sequence belongs to the FlhC family. As to quaternary structure, heterohexamer composed of two FlhC and four FlhD subunits. Each FlhC binds a FlhD dimer, forming a heterotrimer, and a hexamer assembles by dimerization of two heterotrimers. It depends on Zn(2+) as a cofactor.

It localises to the cytoplasm. Functions in complex with FlhD as a master transcriptional regulator that regulates transcription of several flagellar and non-flagellar operons by binding to their promoter region. Activates expression of class 2 flagellar genes, including fliA, which is a flagellum-specific sigma factor that turns on the class 3 genes. Also regulates genes whose products function in a variety of physiological pathways. This Paraburkholderia phymatum (strain DSM 17167 / CIP 108236 / LMG 21445 / STM815) (Burkholderia phymatum) protein is Flagellar transcriptional regulator FlhC.